The following is a 111-amino-acid chain: Carboxysome shell protein CcmK1 (111 aa).

The BMC domain maps to 4–90 (AVGMIETLGF…PHENLEYVLP (87 aa)).

The protein belongs to the bacterial microcompartments protein family. CcmK subfamily. As to quaternary structure, homohexamer. Interacts with full-length CcmM. Forms mixed heterohexamers of all possible stoichiometries with CcmK2, which might form dodecamers. Only very weak interactions with CcmK3 and CcmK4 were seen. Interacts with CcmN and CcmO in the carboxysome.

Its subcellular location is the carboxysome. Functionally, one of the shell proteins of the carboxysome, a polyhedral inclusion where RuBisCO (ribulose bisphosphate carboxylase, rbcL-rbcS) is sequestered. Assembles into hexamers which make sheets that form the facets of the polyhedral carboxysome. The hexamer central pore probably regulates metabolite flux. Its function is as follows. Probably the major shell protein of the carboxysome, a polyhedral inclusion where RuBisCO (ribulose bisphosphate carboxylase, rbcL-rbcS) is sequestered. The central pore probably regulates metabolite flux. Hexamers make sheets that form the facets of the carboxysome. The chain is Carboxysome shell protein CcmK1 from Synechocystis sp. (strain ATCC 27184 / PCC 6803 / Kazusa).